The primary structure comprises 114 residues: T cell receptor beta variable 6-1 (114 aa).

Residues 1–21 form the signal peptide; it reads MSIGLLCCVAFSLLWASPVNA. The Ig-like domain occupies 22 to 114; that stretch reads GVTQTPKFQV…TSVYFCASSE (93 aa). Cys42 and Cys110 are disulfide-bonded. A glycan (N-linked (GlcNAc...) asparagine) is linked at Asn84.

In terms of assembly, alpha-beta TR is a heterodimer composed of an alpha and beta chain; disulfide-linked. The alpha-beta TR is associated with the transmembrane signaling CD3 coreceptor proteins to form the TR-CD3 (TcR or TCR). The assembly of alpha-beta TR heterodimers with CD3 occurs in the endoplasmic reticulum where a single alpha-beta TR heterodimer associates with one CD3D-CD3E heterodimer, one CD3G-CD3E heterodimer and one CD247 homodimer forming a stable octameric structure. CD3D-CD3E and CD3G-CD3E heterodimers preferentially associate with TR alpha and TR beta chains, respectively. The association of the CD247 homodimer is the last step of TcR assembly in the endoplasmic reticulum and is required for transport to the cell surface.

The protein localises to the cell membrane. V region of the variable domain of T cell receptor (TR) beta chain that participates in the antigen recognition. Alpha-beta T cell receptors are antigen specific receptors which are essential to the immune response and are present on the cell surface of T lymphocytes. Recognize peptide-major histocompatibility (MH) (pMH) complexes that are displayed by antigen presenting cells (APC), a prerequisite for efficient T cell adaptive immunity against pathogens. Binding of alpha-beta TR to pMH complex initiates TR-CD3 clustering on the cell surface and intracellular activation of LCK that phosphorylates the ITAM motifs of CD3G, CD3D, CD3E and CD247 enabling the recruitment of ZAP70. In turn ZAP70 phosphorylates LAT, which recruits numerous signaling molecules to form the LAT signalosome. The LAT signalosome propagates signal branching to three major signaling pathways, the calcium, the mitogen-activated protein kinase (MAPK) kinase and the nuclear factor NF-kappa-B (NF-kB) pathways, leading to the mobilization of transcription factors that are critical for gene expression and essential for T cell growth and differentiation. The T cell repertoire is generated in the thymus, by V-(D)-J rearrangement. This repertoire is then shaped by intrathymic selection events to generate a peripheral T cell pool of self-MH restricted, non-autoaggressive T cells. Post-thymic interaction of alpha-beta TR with the pMH complexes shapes TR structural and functional avidity. In Homo sapiens (Human), this protein is T cell receptor beta variable 6-1.